The chain runs to 112 residues: Putative pterin-4-alpha-carbinolamine dehydratase (112 aa).

The protein belongs to the pterin-4-alpha-carbinolamine dehydratase family.

It carries out the reaction (4aS,6R)-4a-hydroxy-L-erythro-5,6,7,8-tetrahydrobiopterin = (6R)-L-erythro-6,7-dihydrobiopterin + H2O. The chain is Putative pterin-4-alpha-carbinolamine dehydratase from Vibrio campbellii (strain ATCC BAA-1116).